A 239-amino-acid chain; its full sequence is Secreted effector CFEM9 (239 aa).

An N-terminal signal peptide occupies residues 1–18 (MRVLKFLSLMAMLGCTIG). The region spanning 19–125 (QSGSATPGSL…DALRRREDEY (107 aa)) is the CFEM domain. 4 cysteine pairs are disulfide-bonded: cysteine 43/cysteine 82, cysteine 47/cysteine 77, cysteine 57/cysteine 63, and cysteine 65/cysteine 98. Heme is bound at residue aspartate 60. The span at 187–199 (KSATTTEATRNTV) shows a compositional bias: polar residues. A disordered region spans residues 187 to 216 (KSATTTEATRNTVPASTTAPSPSPQLYTGN). Residue glycine 215 is the site of GPI-anchor amidated glycine attachment. An N-linked (GlcNAc...) asparagine glycan is attached at asparagine 216. Positions 216–239 (NASTSRATVSLTVVLTVAAVYLVL) are cleaved as a propeptide — removed in mature form.

The protein belongs to the RBT5 family.

It localises to the cell membrane. Its subcellular location is the secreted. The protein localises to the host nucleus. The protein resides in the host cell membrane. Appears to function during host infection, and may play a role in suppressing the host immune response. This Marssonina brunnea f. sp. multigermtubi (strain MB_m1) (Marssonina leaf spot fungus) protein is Secreted effector CFEM9.